The sequence spans 337 residues: Tetraacyldisaccharide 4'-kinase (337 aa).

55 to 62 (NAGGTGKT) serves as a coordination point for ATP.

The protein belongs to the LpxK family.

The enzyme catalyses a lipid A disaccharide + ATP = a lipid IVA + ADP + H(+). It functions in the pathway glycolipid biosynthesis; lipid IV(A) biosynthesis; lipid IV(A) from (3R)-3-hydroxytetradecanoyl-[acyl-carrier-protein] and UDP-N-acetyl-alpha-D-glucosamine: step 6/6. Functionally, transfers the gamma-phosphate of ATP to the 4'-position of a tetraacyldisaccharide 1-phosphate intermediate (termed DS-1-P) to form tetraacyldisaccharide 1,4'-bis-phosphate (lipid IVA). The chain is Tetraacyldisaccharide 4'-kinase from Dinoroseobacter shibae (strain DSM 16493 / NCIMB 14021 / DFL 12).